The primary structure comprises 82 residues: Delta-actitoxin-Aeq2b 3 (82 aa).

An N-terminal signal peptide occupies residues 1 to 19 (MNRLMILVFAAVILALASA). A propeptide spanning residues 20–26 (DEDVDIT) is cleaved from the precursor. Disulfide bonds link Cys-32/Cys-79, Cys-34/Cys-69, and Cys-62/Cys-80.

It belongs to the sea anemone sodium channel inhibitory toxin family. Type I subfamily.

The protein localises to the secreted. It is found in the nematocyst. Functionally, binds specifically to voltage-gated sodium channels (Nav), thereby delaying their inactivation during signal transduction. Causes death to crabs. The protein is Delta-actitoxin-Aeq2b 3 of Actinia equina (Beadlet anemone).